Here is a 184-residue protein sequence, read N- to C-terminus: Protein YrdA (184 aa).

The protein belongs to the gamma-class carbonic anhydrase family.

The polypeptide is Protein YrdA (yrdA) (Escherichia coli (strain K12)).